The primary structure comprises 316 residues: Transaldolase (316 aa).

Catalysis depends on K132, which acts as the Schiff-base intermediate with substrate.

The protein belongs to the transaldolase family. Type 1 subfamily.

It localises to the cytoplasm. The enzyme catalyses D-sedoheptulose 7-phosphate + D-glyceraldehyde 3-phosphate = D-erythrose 4-phosphate + beta-D-fructose 6-phosphate. Its pathway is carbohydrate degradation; pentose phosphate pathway; D-glyceraldehyde 3-phosphate and beta-D-fructose 6-phosphate from D-ribose 5-phosphate and D-xylulose 5-phosphate (non-oxidative stage): step 2/3. In terms of biological role, transaldolase is important for the balance of metabolites in the pentose-phosphate pathway. This chain is Transaldolase, found in Methylomonas aminofaciens.